We begin with the raw amino-acid sequence, 416 residues long: UDP-N-acetylglucosamine 1-carboxyvinyltransferase (416 aa).

22 to 23 (KN) contributes to the phosphoenolpyruvate binding site. Residue R91 participates in UDP-N-acetyl-alpha-D-glucosamine binding. The Proton donor role is filled by C115. C115 is subject to 2-(S-cysteinyl)pyruvic acid O-phosphothioketal. Residues 120-124 (RPIDL), D305, and I327 contribute to the UDP-N-acetyl-alpha-D-glucosamine site.

Belongs to the EPSP synthase family. MurA subfamily.

The protein resides in the cytoplasm. It catalyses the reaction phosphoenolpyruvate + UDP-N-acetyl-alpha-D-glucosamine = UDP-N-acetyl-3-O-(1-carboxyvinyl)-alpha-D-glucosamine + phosphate. It participates in cell wall biogenesis; peptidoglycan biosynthesis. Its function is as follows. Cell wall formation. Adds enolpyruvyl to UDP-N-acetylglucosamine. This is UDP-N-acetylglucosamine 1-carboxyvinyltransferase from Buchnera aphidicola subsp. Acyrthosiphon pisum (strain APS) (Acyrthosiphon pisum symbiotic bacterium).